Consider the following 1373-residue polypeptide: MTNCEKDEEFVCISCVEEVRYSFVSHLSEALRRKGINNVVVGVDSDDLLFKESQAKIEKAGVSVMVLPGNCDPSDVWLDKFAKVLECQRNNKDQAVVPVLYGDSLLRDQWLSELDFKGLSRIHQSRKECSDSILVEEIVRDVYETHFYVGRIGIYSKLLEIENMVNKQPIGIRCVGIWGMPGIGKTTLAKAVFDQMSSAFDASCFIEDYDKSIHEKGLYCLLEEQLLPGNDATIMKLSSLRDRLNSKRVLVVLDDVRNALVGESFLEGFDWLGPGSLIIITSRDKQVFCLCGINQIYEVQGLNEKEARQLFLLSASIKEDMGEQNLQELSVRVINYANGNPLAINVYGRELKGKKKLSEMETAFLKLKRRPPFKIVDAFKSTYDTLSDNEKNIFLDIACFFQGENVNYVIQLLEGCGFFPHVEIDVLVDKCLVTISENRVWLHKLTQDIGREIINGETVQIERRRRLWEPWSIKYLLEYNEHKANGEPKTTFKRAQGSEEIEGLFLDTSNLRFDLQPSAFKNMLNLRLLKIYCSNPEVHPVINFPTGSLHSLPNELRLLHWENYPLKSLPQNFDPRHLVEINMPYSQLQKLWGGTKNLEMLRTIRLCHSHHLVDIDDLLKAENLEVIDLQGCTRLQNFPAAGRLLRLRDVNLSGCIKIKSVLEIPPNIEKLHLQGTGILALPVSTVKPNHRELVNFLTEIPGLSEASKLERLTSLLESNSSCQDLGKLICLELKDCSCLQSLPNMANLDLNVLDLSGCSSLNSIQGFPRFLKQLYLGGTAIREVPQLPQSLEILNAHGSCLRSLPNMANLEFLKVLDLSGCSELETIQGFPRNLKELYFAGTTLREVPQLPLSLEVLNAHGSDSEKLPMHYKFNNFFDLSQQVVNDFFLKTLTYVKHIPRGYTQELINKAPTFSFSAPSHTNQNATFDLQPGSSVMTRLNHSWRNTLVGFGMLVEVAFPEDYCDATDFGISCVCRWSNKEGRSCRIERNFHCWAPGKVVPKVRKDHTFVFSDVNMRPSTGEGNDPDIWAGLVVFEFFPINQQTKCLNDRFTVTRCGVRVINVATGNTSLENISLVLSLDPVEVSGYEVLRVSYDDLQEMDKVLFLYIASLFNDEDVDFVAPLIAGIDLDVSSGLKVLADVSLISVSSNGEIVMHSLQRQMGKEILHGQSMLLSDCESSMTENLSDVPKKEKKHRESKVKKVVSIPAIDEGDLWTWRKYGQKDILGSRFPRGYYRCAYKFTHGCKATKQVQRSETDSNMLAITYLSEHNHPRPTKRKALADSTRSTSSSICSAITTSASSRVFQNKDEPNKPHLPSSSTPPGNAAVLFKMTDMEEFQDNMEVDNDVVDTRTLALFPEFQHQPEEEYPWSTFFDY.

Residues 5 to 146 (EKDEEFVCIS…EIVRDVYETH (142 aa)) enclose the TIR domain. Residues 170–421 (IGIRCVGIWG…LLEGCGFFPH (252 aa)) enclose the NB-ARC domain. ATP is bound at residue 179–186 (GMPGIGKT). LRR repeat units follow at residues 498–522 (SEEIEGLFLDTSNLRFDLQPSAFKN), 535–553 (NPEVHPVINFPTGSLHSLP), 554–575 (NELRLLHWENYPLKSLPQNFDP), 577–598 (HLVEINMPYSQLQKLWGGTKNL), 621–646 (AENLEVIDLQGCTRLQNFPAAGRLLR), 665–688 (PPNIEKLHLQGTGILALPVSTVKP), 742–766 (LPNMANLDLNVLDLSGCSSLNSIQG), 768–793 (PRFLKQLYLGGTAIREVPQLPQSLEI), and 831–854 (PRNLKELYFAGTTLREVPQLPLSL). Residues 988 to 1005 (RNFHCWAPGKVVPKVRKD) carry the Nuclear localization signal motif. The segment at residues 1204–1272 (IPAIDEGDLW…YLSEHNHPRP (69 aa)) is a DNA-binding region (WRKY). The disordered stretch occupies residues 1300–1323 (RVFQNKDEPNKPHLPSSSTPPGNA).

As to quaternary structure, interacts with PopP2, a R.solanacearum type III effector.

The protein localises to the nucleus. Transcription factor. Interacts specifically with the W box (5'-(T)TGAC[CT]-3'), a frequently occurring elicitor-responsive cis-acting element. Also acts as a disease resistance protein involved in resistance to fungal and bacterial pathogens, including R.solanacearum, P.syringae pv. tomato and C.higginsianum. In presence of RPS4, elicites an EDS1-dependent hypersensitive response. This is Disease resistance protein RRS1 from Arabidopsis thaliana (Mouse-ear cress).